We begin with the raw amino-acid sequence, 428 residues long: 3-phosphoshikimate 1-carboxyvinyltransferase (428 aa).

Positions 22, 23, and 27 each coordinate 3-phosphoshikimate. Phosphoenolpyruvate is bound at residue K22. The phosphoenolpyruvate site is built by G98 and R126. 3-phosphoshikimate contacts are provided by S172, S173, Q174, S200, D316, N339, and K343. Q174 provides a ligand contact to phosphoenolpyruvate. Catalysis depends on D316, which acts as the Proton acceptor. Residues R347, R389, and K414 each contribute to the phosphoenolpyruvate site.

The protein belongs to the EPSP synthase family. Monomer.

It localises to the cytoplasm. It carries out the reaction 3-phosphoshikimate + phosphoenolpyruvate = 5-O-(1-carboxyvinyl)-3-phosphoshikimate + phosphate. The protein operates within metabolic intermediate biosynthesis; chorismate biosynthesis; chorismate from D-erythrose 4-phosphate and phosphoenolpyruvate: step 6/7. Catalyzes the transfer of the enolpyruvyl moiety of phosphoenolpyruvate (PEP) to the 5-hydroxyl of shikimate-3-phosphate (S3P) to produce enolpyruvyl shikimate-3-phosphate and inorganic phosphate. The polypeptide is 3-phosphoshikimate 1-carboxyvinyltransferase (Psychromonas ingrahamii (strain DSM 17664 / CCUG 51855 / 37)).